We begin with the raw amino-acid sequence, 283 residues long: Pantothenate synthetase (283 aa).

30–37 (MGNLHDGH) serves as a coordination point for ATP. Catalysis depends on His-37, which acts as the Proton donor. Residue Gln-61 participates in (R)-pantoate binding. A beta-alanine-binding site is contributed by Gln-61. 149–152 (GEKD) contributes to the ATP binding site. (R)-pantoate is bound at residue Gln-155. 186–189 (LSSR) lines the ATP pocket.

This sequence belongs to the pantothenate synthetase family. Homodimer.

Its subcellular location is the cytoplasm. It catalyses the reaction (R)-pantoate + beta-alanine + ATP = (R)-pantothenate + AMP + diphosphate + H(+). It participates in cofactor biosynthesis; (R)-pantothenate biosynthesis; (R)-pantothenate from (R)-pantoate and beta-alanine: step 1/1. Catalyzes the condensation of pantoate with beta-alanine in an ATP-dependent reaction via a pantoyl-adenylate intermediate. This is Pantothenate synthetase from Escherichia coli O6:H1 (strain CFT073 / ATCC 700928 / UPEC).